The primary structure comprises 450 residues: Bifunctional protein GlmU (450 aa).

The tract at residues M1 to R221 is pyrophosphorylase. UDP-N-acetyl-alpha-D-glucosamine-binding positions include L6–G9, K20, Q69, G74–T75, Y96–D98, G135, E150, N165, and N219. D98 lines the Mg(2+) pocket. N219 serves as a coordination point for Mg(2+). The interval I222 to K242 is linker. Residues G243–D450 form an N-acetyltransferase region. Positions 324 and 342 each coordinate UDP-N-acetyl-alpha-D-glucosamine. H354 serves as the catalytic Proton acceptor. 2 residues coordinate UDP-N-acetyl-alpha-D-glucosamine: Y357 and N368. Residues A371, S396, A414, and R431 each coordinate acetyl-CoA.

This sequence in the N-terminal section; belongs to the N-acetylglucosamine-1-phosphate uridyltransferase family. In the C-terminal section; belongs to the transferase hexapeptide repeat family. Homotrimer. Requires Mg(2+) as cofactor.

The protein localises to the cytoplasm. The catalysed reaction is alpha-D-glucosamine 1-phosphate + acetyl-CoA = N-acetyl-alpha-D-glucosamine 1-phosphate + CoA + H(+). It catalyses the reaction N-acetyl-alpha-D-glucosamine 1-phosphate + UTP + H(+) = UDP-N-acetyl-alpha-D-glucosamine + diphosphate. The protein operates within nucleotide-sugar biosynthesis; UDP-N-acetyl-alpha-D-glucosamine biosynthesis; N-acetyl-alpha-D-glucosamine 1-phosphate from alpha-D-glucosamine 6-phosphate (route II): step 2/2. Its pathway is nucleotide-sugar biosynthesis; UDP-N-acetyl-alpha-D-glucosamine biosynthesis; UDP-N-acetyl-alpha-D-glucosamine from N-acetyl-alpha-D-glucosamine 1-phosphate: step 1/1. It participates in bacterial outer membrane biogenesis; LPS lipid A biosynthesis. Its function is as follows. Catalyzes the last two sequential reactions in the de novo biosynthetic pathway for UDP-N-acetylglucosamine (UDP-GlcNAc). The C-terminal domain catalyzes the transfer of acetyl group from acetyl coenzyme A to glucosamine-1-phosphate (GlcN-1-P) to produce N-acetylglucosamine-1-phosphate (GlcNAc-1-P), which is converted into UDP-GlcNAc by the transfer of uridine 5-monophosphate (from uridine 5-triphosphate), a reaction catalyzed by the N-terminal domain. In Pseudothermotoga lettingae (strain ATCC BAA-301 / DSM 14385 / NBRC 107922 / TMO) (Thermotoga lettingae), this protein is Bifunctional protein GlmU.